We begin with the raw amino-acid sequence, 300 residues long: Ribonuclease HIII (300 aa).

Positions 83–300 constitute an RNase H type-2 domain; the sequence is IPIIGSDEVG…THKAQALLTK (218 aa). 3 residues coordinate a divalent metal cation: aspartate 89, glutamate 90, and aspartate 194.

Belongs to the RNase HII family. RnhC subfamily. Requires Mn(2+) as cofactor. It depends on Mg(2+) as a cofactor.

Its subcellular location is the cytoplasm. The enzyme catalyses Endonucleolytic cleavage to 5'-phosphomonoester.. In terms of biological role, endonuclease that specifically degrades the RNA of RNA-DNA hybrids. In Streptococcus pyogenes serotype M1, this protein is Ribonuclease HIII.